A 1357-amino-acid polypeptide reads, in one-letter code: DNA-directed RNA polymerase subunit beta (1357 aa).

Belongs to the RNA polymerase beta chain family. As to quaternary structure, the RNAP catalytic core consists of 2 alpha, 1 beta, 1 beta' and 1 omega subunit. When a sigma factor is associated with the core the holoenzyme is formed, which can initiate transcription.

The enzyme catalyses RNA(n) + a ribonucleoside 5'-triphosphate = RNA(n+1) + diphosphate. In terms of biological role, DNA-dependent RNA polymerase catalyzes the transcription of DNA into RNA using the four ribonucleoside triphosphates as substrates. The polypeptide is DNA-directed RNA polymerase subunit beta (Pseudomonas savastanoi pv. phaseolicola (strain 1448A / Race 6) (Pseudomonas syringae pv. phaseolicola (strain 1448A / Race 6))).